The sequence spans 314 residues: Thymidylate synthase (314 aa).

Residues R32 and 176 to 177 (RR) each bind dUMP. The Nucleophile role is filled by C196. DUMP contacts are provided by residues 216 to 219 (RSCD), N227, and 257 to 259 (HLY). Position 219 (D219) interacts with (6R)-5,10-methylene-5,6,7,8-tetrahydrofolate. A313 is a binding site for (6R)-5,10-methylene-5,6,7,8-tetrahydrofolate.

It belongs to the thymidylate synthase family. Bacterial-type ThyA subfamily. Homodimer.

The protein localises to the cytoplasm. It carries out the reaction dUMP + (6R)-5,10-methylene-5,6,7,8-tetrahydrofolate = 7,8-dihydrofolate + dTMP. It functions in the pathway pyrimidine metabolism; dTTP biosynthesis. Its function is as follows. Catalyzes the reductive methylation of 2'-deoxyuridine-5'-monophosphate (dUMP) to 2'-deoxythymidine-5'-monophosphate (dTMP) while utilizing 5,10-methylenetetrahydrofolate (mTHF) as the methyl donor and reductant in the reaction, yielding dihydrofolate (DHF) as a by-product. This enzymatic reaction provides an intracellular de novo source of dTMP, an essential precursor for DNA biosynthesis. The protein is Thymidylate synthase of Novosphingobium aromaticivorans (strain ATCC 700278 / DSM 12444 / CCUG 56034 / CIP 105152 / NBRC 16084 / F199).